Reading from the N-terminus, the 154-residue chain is Large ribosomal subunit protein uL13 (154 aa).

It belongs to the universal ribosomal protein uL13 family. As to quaternary structure, part of the 50S ribosomal subunit.

Functionally, this protein is one of the early assembly proteins of the 50S ribosomal subunit, although it is not seen to bind rRNA by itself. It is important during the early stages of 50S assembly. This chain is Large ribosomal subunit protein uL13, found in Sinorhizobium medicae (strain WSM419) (Ensifer medicae).